The chain runs to 156 residues: Translation initiation factor IF-1, chloroplastic (156 aa).

Positions 1–35 (MAASLTLMTSPPCSRSSKSPSPSPSPSLSCNQQQQ) are disordered. The transit peptide at 1–49 (MAASLTLMTSPPCSRSSKSPSPSPSPSLSCNQQQQYKPLLHHQWPPQIS) directs the protein to the chloroplast. Low complexity predominate over residues 10–20 (SPPCSRSSKSP). The region spanning 72-148 (GGSPSVQEQK…TRGRITYRLR (77 aa)) is the S1-like domain.

The protein belongs to the IF-1 family. In terms of assembly, component of the 30S ribosomal translation pre-initiation complex which assembles on the 30S ribosome in the order IF-2 and IF-3, IF-1 and N-formylmethionyl-tRNA(fMet); mRNA recruitment can occur at any time during PIC assembly.

It localises to the plastid. It is found in the chloroplast. One of the essential components for the initiation of protein synthesis. Stabilizes the binding of IF-2 and IF-3 on the 30S subunit to which N-formylmethionyl-tRNA(fMet) subsequently binds. Helps modulate mRNA selection, yielding the 30S pre-initiation complex (PIC). Upon addition of the 50S ribosomal subunit IF-1, IF-2 and IF-3 are released leaving the mature 70S translation initiation complex. The sequence is that of Translation initiation factor IF-1, chloroplastic (infA) from Mesembryanthemum crystallinum (Common ice plant).